A 105-amino-acid polypeptide reads, in one-letter code: Heat shock protein HspQ (105 aa).

This sequence belongs to the HspQ family.

The protein resides in the cytoplasm. Its function is as follows. Involved in the degradation of certain denaturated proteins, including DnaA, during heat shock stress. The protein is Heat shock protein HspQ of Salmonella choleraesuis (strain SC-B67).